A 512-amino-acid polypeptide reads, in one-letter code: Beta-glucosidase 44 (512 aa).

Residues 1 to 23 form the signal peptide; sequence MRHLSSPPWPLLLLLLLSSFTSG. Q58 is a binding site for a beta-D-glucoside. A glycan (N-linked (GlcNAc...) asparagine) is linked at N86. Residues H159 and 204 to 205 each bind a beta-D-glucoside; that span reads NE. E205 functions as the Proton donor in the catalytic mechanism. An intrachain disulfide couples C224 to C231. N230 is a glycosylation site (N-linked (GlcNAc...) asparagine). Positions 347 and 419 each coordinate a beta-D-glucoside. The active-site Nucleophile is E419. The N-linked (GlcNAc...) asparagine glycan is linked to N427. A beta-D-glucoside is bound by residues W466, 473–474, and F482; that span reads EW.

Belongs to the glycosyl hydrolase 1 family. Homodimer.

It is found in the secreted. It catalyses the reaction Hydrolysis of terminal, non-reducing beta-D-glucosyl residues with release of beta-D-glucose.. Functionally, hydrolyzes p-nitrophenyl beta-D-glucoside, p-nitrophenyl beta-D-mannoside, cellobiose, 4-methylumbelliferyl-beta-D-glucoside, laminarin, amygdalin, esculin and gentiobiose. The protein is Beta-glucosidase 44 of Arabidopsis thaliana (Mouse-ear cress).